The following is a 249-amino-acid chain: Phosphoribosylaminoimidazole-succinocarboxamide synthase (249 aa).

Belongs to the SAICAR synthetase family.

It carries out the reaction 5-amino-1-(5-phospho-D-ribosyl)imidazole-4-carboxylate + L-aspartate + ATP = (2S)-2-[5-amino-1-(5-phospho-beta-D-ribosyl)imidazole-4-carboxamido]succinate + ADP + phosphate + 2 H(+). Its pathway is purine metabolism; IMP biosynthesis via de novo pathway; 5-amino-1-(5-phospho-D-ribosyl)imidazole-4-carboxamide from 5-amino-1-(5-phospho-D-ribosyl)imidazole-4-carboxylate: step 1/2. This Roseiflexus castenholzii (strain DSM 13941 / HLO8) protein is Phosphoribosylaminoimidazole-succinocarboxamide synthase.